Consider the following 376-residue polypeptide: Queuine tRNA-ribosyltransferase accessory subunit 2 (376 aa).

4 residues coordinate Zn(2+): cysteine 323, cysteine 325, cysteine 328, and histidine 354.

The protein belongs to the queuine tRNA-ribosyltransferase family. QTRT2 subfamily. As to quaternary structure, heterodimer of a catalytic subunit and an accessory subunit. Zn(2+) serves as cofactor.

It is found in the cytoplasm. Functionally, non-catalytic subunit of the queuine tRNA-ribosyltransferase (TGT) that catalyzes the base-exchange of a guanine (G) residue with queuine (Q) at position 34 (anticodon wobble position) in tRNAs with GU(N) anticodons (tRNA-Asp, -Asn, -His and -Tyr), resulting in the hypermodified nucleoside queuosine (7-(((4,5-cis-dihydroxy-2-cyclopenten-1-yl)amino)methyl)-7-deazaguanosine). This chain is Queuine tRNA-ribosyltransferase accessory subunit 2, found in Caenorhabditis briggsae.